We begin with the raw amino-acid sequence, 171 residues long: Probable DNA-directed RNA polymerase subunit delta (171 aa).

In terms of domain architecture, HTH HARE-type spans 14 to 81; sequence MALVEIAYEI…SDQTWGLRSW (68 aa). The tract at residues 138–171 is disordered; it reads EFDEIDEADDDELDDLEDEILDDDEDFDEEEDEE.

Belongs to the RpoE family. In terms of assembly, RNAP is composed of a core of 2 alpha, a beta and a beta' subunits. The core is associated with a delta subunit and one of several sigma factors.

In terms of biological role, participates in both the initiation and recycling phases of transcription. In the presence of the delta subunit, RNAP displays an increased specificity of transcription, a decreased affinity for nucleic acids, and an increased efficiency of RNA synthesis because of enhanced recycling. This Bacillus licheniformis (strain ATCC 14580 / DSM 13 / JCM 2505 / CCUG 7422 / NBRC 12200 / NCIMB 9375 / NCTC 10341 / NRRL NRS-1264 / Gibson 46) protein is Probable DNA-directed RNA polymerase subunit delta.